We begin with the raw amino-acid sequence, 180 residues long: Inorganic pyrophosphatase (180 aa).

Positions 30, 44, and 56 each coordinate substrate. Residues Asp66, Asp71, and Asp103 each coordinate Mg(2+). Tyr142 contacts substrate.

It belongs to the PPase family. In terms of assembly, homohexamer. Mg(2+) serves as cofactor.

Its subcellular location is the cytoplasm. It carries out the reaction diphosphate + H2O = 2 phosphate + H(+). Catalyzes the hydrolysis of inorganic pyrophosphate (PPi) forming two phosphate ions. In Buchnera aphidicola subsp. Schizaphis graminum (strain Sg), this protein is Inorganic pyrophosphatase.